The following is a 121-amino-acid chain: Large ribosomal subunit protein eL18 (121 aa).

This sequence belongs to the eukaryotic ribosomal protein eL18 family.

In Methanothermobacter thermautotrophicus (strain ATCC 29096 / DSM 1053 / JCM 10044 / NBRC 100330 / Delta H) (Methanobacterium thermoautotrophicum), this protein is Large ribosomal subunit protein eL18.